We begin with the raw amino-acid sequence, 660 residues long: DNA polymerase alpha-associated DNA helicase A (660 aa).

232–239 (GPPGTGKT) lines the ATP pocket.

It belongs to the DNA2/NAM7 helicase family. In terms of assembly, associates with the hexameric DNA polymerase alpha.

It is found in the cytoplasm. It localises to the nucleus. It catalyses the reaction ATP + H2O = ADP + phosphate + H(+). In terms of biological role, DNA polymerase alpha-associated DNA helicase which may be involved in DNA replication. This chain is DNA polymerase alpha-associated DNA helicase A (hcs1), found in Schizosaccharomyces pombe (strain 972 / ATCC 24843) (Fission yeast).